Here is a 352-residue protein sequence, read N- to C-terminus: Selenide, water dikinase (352 aa).

C21 is a catalytic residue. ATP contacts are provided by residues K24 and 51-53 (TND). D54 contacts Mg(2+). ATP is bound by residues D71, D94, and 141 to 143 (GHS). D94 contributes to the Mg(2+) binding site. A Mg(2+)-binding site is contributed by D231.

The protein belongs to the selenophosphate synthase 1 family. Class I subfamily. In terms of assembly, homodimer. It depends on Mg(2+) as a cofactor.

It carries out the reaction hydrogenselenide + ATP + H2O = selenophosphate + AMP + phosphate + 2 H(+). Synthesizes selenophosphate from selenide and ATP. The polypeptide is Selenide, water dikinase (Myxococcus xanthus (strain DK1622)).